The chain runs to 121 residues: MRYLAAYLLAQLGGTGRPQESDIKNILSSVGVECEQERAKLGVDQLHGKNVRDLINTGKEKMSAVSFGATPVAVPSGGAPAAATAAAEAPKGGDKAAAPPKEEKKEESEESDADMGFSPFD.

Residues 72 to 99 (VAVPSGGAPAAATAAAEAPKGGDKAAAP) show a composition bias toward low complexity. The disordered stretch occupies residues 72-121 (VAVPSGGAPAAATAAAEAPKGGDKAAAPPKEEKKEESEESDADMGFSPFD).

Belongs to the eukaryotic ribosomal protein P1/P2 family. In terms of assembly, P1 and P2 exist as dimers at the large ribosomal subunit. Post-translationally, phosphorylated.

Plays an important role in the elongation step of protein synthesis. This Taenia solium (Pork tapeworm) protein is Large ribosomal subunit protein P2.